Here is a 140-residue protein sequence, read N- to C-terminus: Vacuolar protein sorting-associated protein 55 homolog (140 aa).

Over 1–16 (MADVPGYLRTCLDMGK) the chain is Cytoplasmic. Residues 17–37 (IAFLAILVSTGIVLQILACAL) form a helical membrane-spanning segment. The Lumenal portion of the chain corresponds to 38 to 40 (FNN). A helical transmembrane segment spans residues 41-61 (WWPMLSVIMYVLLPMPLLFFG). Topologically, residues 62 to 75 (GSDSTSLFNESDNS) are cytoplasmic. A helical membrane pass occupies residues 76 to 98 (WINAAKFLTGASAVGSVAIPSIL). The Lumenal segment spans residues 99–108 (KHAGLIGWGA). The chain crosses the membrane as a helical span at residues 109–129 (LALDLSSYVVFLVAILGYICI). Residues 130–140 (GDASDNYYSYI) lie on the Cytoplasmic side of the membrane.

Belongs to the OB-RGRP/VPS55 family.

It is found in the endosome membrane. In terms of biological role, involved in endosomal protein transport. The sequence is that of Vacuolar protein sorting-associated protein 55 homolog from Arabidopsis thaliana (Mouse-ear cress).